A 66-amino-acid polypeptide reads, in one-letter code: Large ribosomal subunit protein bL35 (66 aa).

The segment covering 1 to 26 has biased composition (basic residues); the sequence is MPKMKTHRGAAKRVKRTGSGKLKRSR. The disordered stretch occupies residues 1-49; that stretch reads MPKMKTHRGAAKRVKRTGSGKLKRSRAFTSHLFANKSTKQKRKLRKASL.

This sequence belongs to the bacterial ribosomal protein bL35 family.

The sequence is that of Large ribosomal subunit protein bL35 from Staphylococcus saprophyticus subsp. saprophyticus (strain ATCC 15305 / DSM 20229 / NCIMB 8711 / NCTC 7292 / S-41).